The sequence spans 415 residues: Gamma-glutamyl phosphate reductase (415 aa).

Belongs to the gamma-glutamyl phosphate reductase family.

The protein resides in the cytoplasm. The enzyme catalyses L-glutamate 5-semialdehyde + phosphate + NADP(+) = L-glutamyl 5-phosphate + NADPH + H(+). It participates in amino-acid biosynthesis; L-proline biosynthesis; L-glutamate 5-semialdehyde from L-glutamate: step 2/2. Its function is as follows. Catalyzes the NADPH-dependent reduction of L-glutamate 5-phosphate into L-glutamate 5-semialdehyde and phosphate. The product spontaneously undergoes cyclization to form 1-pyrroline-5-carboxylate. In Cutibacterium acnes (strain DSM 16379 / KPA171202) (Propionibacterium acnes), this protein is Gamma-glutamyl phosphate reductase.